The chain runs to 261 residues: Proliferating cell nuclear antigen (261 aa).

N6-acetyllysine occurs at positions 14, 77, and 80. The DNA-binding element occupies 61-80 (RCDRNLAMGVNLTSMSKILK). The cysteines at positions 135 and 162 are disulfide-linked. Lys164 participates in a covalent cross-link: Glycyl lysine isopeptide (Lys-Gly) (interchain with G-Cter in SUMO2); alternate. Lys164 participates in a covalent cross-link: Glycyl lysine isopeptide (Lys-Gly) (interchain with G-Cter in ubiquitin); alternate. The residue at position 211 (Tyr211) is a Phosphotyrosine; by EGFR. The residue at position 248 (Lys248) is an N6-acetyllysine. Lys254 participates in a covalent cross-link: Glycyl lysine isopeptide (Lys-Gly) (interchain with G-Cter in SUMO2).

The protein belongs to the PCNA family. Homotrimer. Interacts with p300/EP300; the interaction occurs on chromatin in UV-irradiated damaged cells. Interacts with CREBBP (via transactivation domain and C-terminus); the interaction occurs on chromatin in UV-irradiated damaged cells. Directly interacts with POLD1, POLD3 and POLD4 subunits of the DNA polymerase delta complex, POLD3 being the major interacting partner; the interaction with POLD3 is inhibited by CDKN1A/p21(CIP1). Forms a complex with activator 1 heteropentamer in the presence of ATP. Interacts with EXO1, POLH, POLK, DNMT1, ERCC5, FEN1, CDC6 and POLDIP2. Interacts with POLB. Interacts with APEX2; this interaction is triggered by reactive oxygen species and increased by misincorporation of uracil in nuclear DNA. Forms a ternary complex with DNTTIP2 and core histone. Interacts with KCTD10. Interacts with PPP1R15A. Interacts with SMARCA5/SNF2H. Interacts with BAZ1B/WSTF; the interaction is direct and is required for BAZ1B/WSTF binding to replication foci during S phase. Interacts with HLTF and SHPRH. Interacts with NUDT15. Interaction is disrupted in response to UV irradiation and acetylation. Interacts with CDKN1A/p21(CIP1) and CDT1; interacts via their PIP-box which also recruits the DCX(DTL) complex. The interaction with CDKN1A inhibits POLD3 binding. Interacts with DDX11. Interacts with EGFR; positively regulates PCNA. Interacts with PARPBP. Interacts (when ubiquitinated) with SPRTN; leading to enhance RAD18-mediated PCNA ubiquitination. Interacts (when polyubiquitinated) with ZRANB3. Interacts with SMARCAD1. Interacts with CDKN1C. Interacts with PCLAF (via PIP-box). Interacts with RTEL1 (via PIP-box); the interaction is direct and essential for the suppression of telomere fragility. Interacts with FAM111A (via PIP-box); the interaction is direct and required for PCNA loading on chromatin binding. Interacts with LIG1. Interacts with SETMAR. Interacts with ANKRD17. Interacts with FBXO18/FBH1 (via PIP-box); the interaction recruits the DCX(DTL) complex and promotes ubiquitination and degradation of FBXO18/FBH1. Interacts with POLN. Interacts with SDE2 (via PIP-box); the interaction is direct and prevents ultraviolet light induced monoubiquitination. Component of the replisome complex composed of at least DONSON, MCM2, MCM7, PCNA and TICRR; interaction at least with PCNA occurs during DNA replication. Interacts with MAPK15; the interaction is chromatin binding dependent and prevents MDM2-mediated PCNA destruction by inhibiting the association of PCNA with MDM2. Interacts with PARP10 (via PIP-box). Interacts with DDI2. Interacts with HMCES (via PIP-box). Interacts with TRAIP (via PIP-box). Interacts with UHRF2. Interacts with ALKBH2; this interaction is enhanced during the S-phase of the cell cycle. Interacts with ATAD5; the interaction promotes USP1-mediated PCNA deubiquitination. Interacts (when phosphorylated) with GRB2. Interacts with ANG. Interacts with nuclear UNG; this interaction mediates UNG recruitment to S-phase replication foci. Interacts with ERCC6L2 (via an atypical PIP-box); this interaction facilitates cenrtomeric localization of ERCC6L2. Post-translationally, phosphorylated. Phosphorylation at Tyr-211 by EGFR stabilizes chromatin-associated PCNA. Acetylated by CREBBP and p300/EP300; preferentially acetylated by CREBBP on Lys-80, Lys-13 and Lys-14 and on Lys-77 by p300/EP300 upon loading on chromatin in response to UV irradiation. Lysine acetylation disrupts association with chromatin, hence promoting PCNA ubiquitination and proteasomal degradation in response to UV damage in a CREBBP- and EP300-dependent manner. Acetylation disrupts interaction with NUDT15 and promotes degradation. In terms of processing, ubiquitinated. Following DNA damage, can be either monoubiquitinated to stimulate direct bypass of DNA lesions by specialized DNA polymerases or polyubiquitinated to promote recombination-dependent DNA synthesis across DNA lesions by template switching mechanisms. Following induction of replication stress, monoubiquitinated by the UBE2B-RAD18 complex on Lys-164, leading to recruit translesion (TLS) polymerases, which are able to synthesize across DNA lesions in a potentially error-prone manner. An error-free pathway also exists and requires non-canonical polyubiquitination on Lys-164 through 'Lys-63' linkage of ubiquitin moieties by the E2 complex UBE2N-UBE2V2 and the E3 ligases, HLTF, RNF8 and SHPRH. This error-free pathway, also known as template switching, employs recombination mechanisms to synthesize across the lesion, using as a template the undamaged, newly synthesized strand of the sister chromatid. Monoubiquitination at Lys-164 also takes place in undamaged proliferating cells, and is mediated by the DCX(DTL) complex, leading to enhance PCNA-dependent translesion DNA synthesis. Sumoylated during S phase. Post-translationally, methylated on glutamate residues by ARMT1.

The protein resides in the nucleus. Its function is as follows. Auxiliary protein of DNA polymerase delta and epsilon, is involved in the control of eukaryotic DNA replication by increasing the polymerase's processibility during elongation of the leading strand. Induces a robust stimulatory effect on the 3'-5' exonuclease and 3'-phosphodiesterase, but not apurinic-apyrimidinic (AP) endonuclease, APEX2 activities. Has to be loaded onto DNA in order to be able to stimulate APEX2. Plays a key role in DNA damage response (DDR) by being conveniently positioned at the replication fork to coordinate DNA replication with DNA repair and DNA damage tolerance pathways. Acts as a loading platform to recruit DDR proteins that allow completion of DNA replication after DNA damage and promote postreplication repair: Monoubiquitinated PCNA leads to recruitment of translesion (TLS) polymerases, while 'Lys-63'-linked polyubiquitination of PCNA is involved in error-free pathway and employs recombination mechanisms to synthesize across the lesion. This is Proliferating cell nuclear antigen (Pcna) from Rattus norvegicus (Rat).